A 74-amino-acid polypeptide reads, in one-letter code: MKPNIHPEYVTTEVTCSCGNTFTTRSTAKGGSIHVETCSACHPFYTGKQRVLDTAGRVAKFQQKYAKVQAKKGK.

Zn(2+) is bound by residues Cys16, Cys18, Cys38, and Cys41.

Belongs to the bacterial ribosomal protein bL31 family. Type A subfamily. Part of the 50S ribosomal subunit. Requires Zn(2+) as cofactor.

Binds the 23S rRNA. In Salinispora arenicola (strain CNS-205), this protein is Large ribosomal subunit protein bL31.